The sequence spans 422 residues: La-related protein 6A (422 aa).

Residues 1 to 94 (MSSLPLRSGE…DHGENPVETD (94 aa)) are disordered. The span at 48–61 (VTESSDDVVVNVSE) shows a compositional bias: low complexity. The span at 73–89 (DHERNSGEDRDQDHGEN) shows a compositional bias: basic and acidic residues. Residues 97-188 (VVPIDELNQK…KRLSPLPEIR (92 aa)) enclose the HTH La-type RNA-binding domain. The RRM domain maps to 193–283 (FTVLVENLPE…NGLRVKLLEQ (91 aa)). Positions 286-422 (GKFAQRRPAR…PTSTQTSHEV (137 aa)) are disordered. Positions 295-348 (RREVDKEKDTTGRVHDQTGGEKNKKTREHQNHRLHHSDNPADDDGGNHQKDKNG) are enriched in basic and acidic residues.

It localises to the nucleus. In terms of biological role, transcriptional regulator. This Arabidopsis thaliana (Mouse-ear cress) protein is La-related protein 6A (LARP6A).